We begin with the raw amino-acid sequence, 376 residues long: Ribonucleoside-diphosphate reductase subunit beta (376 aa).

Fe cation-binding residues include aspartate 85, glutamate 116, and histidine 119. The active site involves tyrosine 123. Fe cation is bound by residues glutamate 205, glutamate 239, and histidine 242.

The protein belongs to the ribonucleoside diphosphate reductase small chain family. In terms of assembly, tetramer of two alpha and two beta subunits. Requires Fe cation as cofactor.

The enzyme catalyses a 2'-deoxyribonucleoside 5'-diphosphate + [thioredoxin]-disulfide + H2O = a ribonucleoside 5'-diphosphate + [thioredoxin]-dithiol. Provides the precursors necessary for DNA synthesis. Catalyzes the biosynthesis of deoxyribonucleotides from the corresponding ribonucleotides. The protein is Ribonucleoside-diphosphate reductase subunit beta (nrdB) of Haemophilus influenzae (strain ATCC 51907 / DSM 11121 / KW20 / Rd).